Reading from the N-terminus, the 1009-residue chain is Epstein-Barr nuclear antigen 6 (1009 aa).

Disordered regions lie at residues 1-70, 356-504, 516-646, 663-922, 948-971, and 984-1009; these read MESF…RGWM, TVGE…GACV, VETT…PRPS, QPIQ…DSMA, PLDI…PARC, and DNSE…SELD. Residues 12 to 31 show a composition bias toward basic and acidic residues; sequence QSPDNERGDNVQTTGEHDQD. Residues 381–391 are compositionally biased toward acidic residues; it reads VELESSDDELP. Positions 445–461 are enriched in polar residues; that stretch reads AQSTPERPGPSEQSSVT. Composition is skewed to pro residues over residues 479-495 and 563-574; these read QPPP…TPPP and AAGPPAAGPPAA. 2 stretches are compositionally biased toward polar residues: residues 622–641 and 664–679; these read EITQ…TQPT and PIQS…TQPI. Residues 680–689 show a composition bias toward basic and acidic residues; sequence SHEEQPRYED. Low complexity-rich tracts occupy residues 710–769 and 776–798; these read APYQ…GYQE and PYQG…EPPA. Polar residues predominate over residues 862-874; that stretch reads DQVSQFPHLQSET. Low complexity predominate over residues 876–898; sequence PPRLQLSSVPLVSSSAPSWSSPQ. A compositionally biased stretch (pro residues) spans 899–916; that stretch reads PRAPIRPIPTRFPPPPMP.

It belongs to the herpesviridae EBNA-6 family. In terms of assembly, interacts with host CTPB1; this interaction leads to gene repression, but also seems to interfere with the repressive function of CtBP pre-bound to DNA, leading to EBNA6 mediated up-regulation of many host genes. Interacts with host MYC; this interaction enhances MYC stability. Interacts (via N-terminus) with host RBPJ. Interacts (via N-terminus) with host histone H2AX; this interaction facilitates H2AX proteasomal degradation. Interacts with host TP73; this interaction inhibits TP73-mediated apoptotic pathway. Interacts (via N-terminus) with host PIM1; this interaction upregulates and stabilizes PIM1 and induces cell proliferation by inhibiting the growth suppressive properties of p21.

The protein localises to the host nucleus. It is found in the host nucleus matrix. In terms of biological role, plays an essential role for the activation and immortalization of human B-cells. Represses transcription of viral promoters TP1 and Cp through interaction with host RBPJ, and inhibits EBNA2-mediated activation of these promoters. Targets host chromatin through interactions with host transcription factors, especially RBPJ and IRF4. Alternatively, EBNA6 also regulates the transcription of the EBV oncogene LMP1 in a cell cycle-dependent manner. Modulates the activity of several host proteins involved in cell cycle regulation including host cyclin A, MYC, RB, p21 and p27 mainly through binding to the host SCF(SKP2) complex. Inhibits the promoter of host H2AX and targets H2AX to proteasomal degradation in order to promote latency and cell proliferation. Upregulates host PIM1 expression and stabilization. Potentiates PIM1 to promote cell proliferation by inhibiting the growth suppressive properties of p21. This Epstein-Barr virus (strain GD1) (HHV-4) protein is Epstein-Barr nuclear antigen 6 (EBNA6).